The primary structure comprises 358 residues: MPRLLIAASGTGGHLFPALSVADALPAGWSAHWLGVPDRLETTLVPERYPLTTVNAGGLQGRGLKKVVQLLRLLAASRDVRRLIRRNGIDVVFTTGGYIAAPAILGARWSGVPVVLHESNAIPGRVTRLLGRACTQVAIGLPAAARRIPGCKAIVTGTPVRNSFLQTQTLPDWVPQGPGPLLVVMGGSQGALGLNRMVRPLLPMLLSEGCRVVHLTGSNDPDVNSIKHPGFAERPFSDAIPALLQHADLAISRAGAGSLSELAVSGTPTVLVPFPQAADRHQDANAACAAALGAAVIVHQHGPSEPTLRQTLWRLLGPRLRSCDSAADPLVSMAQAMGTLAEADADQQLAALLQGLVR.

UDP-N-acetyl-alpha-D-glucosamine contacts are provided by residues 11-13 (TGG), N120, R161, S188, and Q282.

This sequence belongs to the glycosyltransferase 28 family. MurG subfamily.

It localises to the cell inner membrane. The enzyme catalyses di-trans,octa-cis-undecaprenyl diphospho-N-acetyl-alpha-D-muramoyl-L-alanyl-D-glutamyl-meso-2,6-diaminopimeloyl-D-alanyl-D-alanine + UDP-N-acetyl-alpha-D-glucosamine = di-trans,octa-cis-undecaprenyl diphospho-[N-acetyl-alpha-D-glucosaminyl-(1-&gt;4)]-N-acetyl-alpha-D-muramoyl-L-alanyl-D-glutamyl-meso-2,6-diaminopimeloyl-D-alanyl-D-alanine + UDP + H(+). It participates in cell wall biogenesis; peptidoglycan biosynthesis. Functionally, cell wall formation. Catalyzes the transfer of a GlcNAc subunit on undecaprenyl-pyrophosphoryl-MurNAc-pentapeptide (lipid intermediate I) to form undecaprenyl-pyrophosphoryl-MurNAc-(pentapeptide)GlcNAc (lipid intermediate II). This is UDP-N-acetylglucosamine--N-acetylmuramyl-(pentapeptide) pyrophosphoryl-undecaprenol N-acetylglucosamine transferase from Synechococcus sp. (strain WH7803).